The sequence spans 138 residues: Endoribonuclease YbeY (138 aa).

Zn(2+) contacts are provided by H106, H110, and D116.

This sequence belongs to the endoribonuclease YbeY family. Zn(2+) serves as cofactor.

The protein resides in the cytoplasm. Single strand-specific metallo-endoribonuclease involved in late-stage 70S ribosome quality control and in maturation of the 3' terminus of the 16S rRNA. The sequence is that of Endoribonuclease YbeY from Phocaeicola vulgatus (strain ATCC 8482 / DSM 1447 / JCM 5826 / CCUG 4940 / NBRC 14291 / NCTC 11154) (Bacteroides vulgatus).